The following is a 181-amino-acid chain: MGCCTGRCTLIFICTLQMLVALERQIFDFLGYQWAPILGNFLHIIVVILGLFGTIQYRPRYIVAYTIWTAFWVAWNVFIICFYLEVGGLSKDTDLMTFNISIHRSWWREHGPGCVWRLVPAPPSKNLGDHSFISVTGCIIEFQYIEVIHSAVQILLSLIGFVYACYVISVITDEEDSCRHK.

The next 4 helical transmembrane spans lie at 5–22, 35–55, 62–82, and 151–171; these read TGRC…LVAL, APIL…FGTI, IVAY…IICF, and AVQI…ISVI.

Belongs to the NKAIN family. Interacts with atp1b1 C-terminus.

The protein localises to the cell membrane. The chain is Sodium/potassium-transporting ATPase subunit beta-1-interacting protein 3 (nkain3) from Xenopus tropicalis (Western clawed frog).